The following is a 210-amino-acid chain: 2-hydroxy-3-keto-5-methylthiopentenyl-1-phosphate phosphatase (210 aa).

The protein belongs to the HAD-like hydrolase superfamily. MtnX family.

The enzyme catalyses 2-hydroxy-5-methylsulfanyl-3-oxopent-1-enyl phosphate + H2O = 1,2-dihydroxy-5-(methylsulfanyl)pent-1-en-3-one + phosphate. Its pathway is amino-acid biosynthesis; L-methionine biosynthesis via salvage pathway; L-methionine from S-methyl-5-thio-alpha-D-ribose 1-phosphate: step 4/6. In terms of biological role, dephosphorylates 2-hydroxy-3-keto-5-methylthiopentenyl-1-phosphate (HK-MTPenyl-1-P) yielding 1,2-dihydroxy-3-keto-5-methylthiopentene (DHK-MTPene). In Microcystis aeruginosa, this protein is 2-hydroxy-3-keto-5-methylthiopentenyl-1-phosphate phosphatase.